Here is a 350-residue protein sequence, read N- to C-terminus: Very-long-chain 3-oxoacyl-CoA reductase (350 aa).

The helical transmembrane segment at 28-48 threads the bilayer; sequence SLVLLAGIGALSVGTFALRLV. 8 residues coordinate NADP(+): valine 79, aspartate 134, asparagine 161, lysine 196, tyrosine 228, lysine 232, valine 261, and serine 263. The active-site Proton donor is tyrosine 228. The Lowers pKa of active site Tyr role is filled by lysine 232.

Belongs to the short-chain dehydrogenases/reductases (SDR) family.

Its subcellular location is the endoplasmic reticulum membrane. It carries out the reaction a very-long-chain (3R)-3-hydroxyacyl-CoA + NADP(+) = a very-long-chain 3-oxoacyl-CoA + NADPH + H(+). It functions in the pathway lipid metabolism; fatty acid biosynthesis. Component of the microsomal membrane bound fatty acid elongation system, which produces the 26-carbon very long-chain fatty acids (VLCFA) from palmitate. Catalyzes the reduction of the 3-ketoacyl-CoA intermediate that is formed in each cycle of fatty acid elongation. VLCFAs serve as precursors for ceramide and sphingolipids. The chain is Very-long-chain 3-oxoacyl-CoA reductase from Mycosarcoma maydis (Corn smut fungus).